We begin with the raw amino-acid sequence, 1243 residues long: Zinc finger protein ZFAT (1243 aa).

Residues 12–35 (FMCKCCNLFSPNQSELLSHVSEKH) form a C2H2-type 1 zinc finger. 2 disordered regions span residues 51-116 (PLST…PSSL) and 147-189 (GEAG…GKEA). Basic residues predominate over residues 70–81 (MKRKRGRPKGST). Residues 116-141 (LECSKCCRKFSNTRQLRKHICIIVLN) form a C2H2-type 2; degenerate zinc finger. Over residues 156–189 (ELEKKCKEDDREKASKRPRSQKTEKVQKISGKEA) the composition is skewed to basic and acidic residues. 7 C2H2-type zinc fingers span residues 271-293 (FTCE…LRIH), 299-321 (YKCP…LRKH), 326-349 (FACD…ERVH), 354-377 (QHCR…RDAH), 404-426 (YDCH…MLVH), 432-454 (FACE…VRKH), and 458-481 (YVCA…KEVH). 20 residues coordinate Zn(2+): Cys-273, Cys-276, His-289, His-293, Cys-301, Cys-304, His-317, His-321, Cys-328, Cys-331, His-344, His-349, Cys-356, Cys-359, His-372, His-377, Cys-406, Cys-409, His-422, and His-426. Zn(2+) contacts are provided by Cys-460, Cys-463, His-476, and His-481. Disordered stretches follow at residues 534-570 (EACP…AEST), 603-625 (TSSA…SSVQ), and 638-705 (AQSA…CKAA). The segment covering 610-620 (AAPEKPPDMQH) has biased composition (basic and acidic residues). Over residues 638-650 (AQSAGSDQESHGA) the composition is skewed to polar residues. 10 C2H2-type zinc fingers span residues 742-764 (LECE…VRTH), 770-793 (YYCS…IQKH), 798-822 (LKCP…LKVH), 830-853 (YSCP…KTNH), 880-903 (MKCP…IWAH), 909-931 (FKCS…MNRH), 937-959 (HLCD…KLLH), 966-988 (FKCT…MEQH), 994-1017 (FRCA…NRKH), and 1041-1064 (LKCP…KNKH). Cys-772, Cys-775, His-788, His-793, Cys-800, Cys-805, His-818, His-822, Cys-832, Cys-835, His-848, His-853, Cys-882, Cys-885, His-899, His-903, Cys-911, Cys-914, His-927, His-931, Cys-939, Cys-942, His-955, and Leu-958 together coordinate Zn(2+).

In terms of tissue distribution, isoform 1 is strongly expressed in placenta, spleen, kidney, testis and peripheral blood leukocytes. Expressed in CD4+ and CD8+ T-cells, CD19+ B-cells and CB14+ monocytes. Isoform 3 is strongly expressed in placenta, ovary, tonsil, CD19+ B-cells and CD14+ monocytes.

It is found in the nucleus. It localises to the cytoplasm. The protein localises to the cytosol. Its function is as follows. May be involved in transcriptional regulation. Overexpression causes down-regulation of a number of genes involved in the immune response. Some genes are also up-regulated. The protein is Zinc finger protein ZFAT (ZFAT) of Homo sapiens (Human).